The following is a 1910-amino-acid chain: C2 domain-containing protein (1910 aa).

Residues 1-28 show a composition bias toward basic and acidic residues; it reads MMKLKEMVEAAEAKVESKPPQAAEEKAP. Disordered regions lie at residues 1-54, 355-377, and 398-428; these read MMKL…EPLD, AMKL…PEDG, and LEEL…DGPQ. The segment covering 414 to 423 has biased composition (basic and acidic residues); sequence KGEDKKDGNK. A C2 domain is found at 557-678; it reads QLGEVSESDS…FFNEKHNKRN (122 aa). 2 stretches are compositionally biased toward basic and acidic residues: residues 1192–1205 and 1215–1228; these read LAQK…DAQR and GHEG…DKQG. Disordered regions lie at residues 1192 to 1267, 1405 to 1424, 1431 to 1654, 1666 to 1747, 1822 to 1841, and 1879 to 1910; these read LAQK…VKKG, ATAG…RDMQ, LEEA…SMGA, QRKH…FLSS, AKEE…DWSD, and DACS…AGRT. 2 stretches are compositionally biased toward low complexity: residues 1239–1257 and 1405–1414; these read AAAA…VQGA and ATAGEGEQQT. Residues 1440–1469 are compositionally biased toward basic residues; that stretch reads KKKKKKEKKEKKEKKEKKEKKEKKEKKKKK. A compositionally biased stretch (low complexity) spans 1492 to 1502; sequence PAAAIPSVLLP. Residues 1517–1526 are compositionally biased toward basic residues; it reads KKEKKEKKKK. Residues 1550 to 1561 show a composition bias toward low complexity; that stretch reads PAAAIPSILLPA. Basic and acidic residues predominate over residues 1569 to 1584; sequence EKPKEKKTEKKKEKHT. Polar residues predominate over residues 1595–1604; that stretch reads LPESETTAVV. Composition is skewed to low complexity over residues 1620–1629 and 1675–1698; these read VPSSIASSEA and SSSS…SSSS. The span at 1701–1711 shows a compositional bias: basic and acidic residues; that stretch reads AETRAKADALR. 2 stretches are compositionally biased toward low complexity: residues 1712-1722 and 1729-1747; these read ARLQAAQARLA and VSSS…FLSS. A coiled-coil region spans residues 1766–1828; it reads QQRLQKMVSG…TRRAKEEKDL (63 aa). Residues 1890-1904 show a composition bias toward polar residues; the sequence is ESRTTAGAKLRQQQL.

It is found in the membrane. Its function is as follows. Regulates microneme secretion. Probably involved in regulation of rhoptry and dense granule secretion. The sequence is that of C2 domain-containing protein from Toxoplasma gondii.